Reading from the N-terminus, the 357-residue chain is Chorismate synthase (357 aa).

Residues glutamate 38–lysine 49 show a composition bias toward basic and acidic residues. The segment at glutamate 38–arginine 60 is disordered. Positions 48 and 54 each coordinate NADP(+). Residues arginine 125–serine 127, asparagine 243–alanine 244, glycine 283, lysine 298–serine 302, and arginine 324 contribute to the FMN site.

It belongs to the chorismate synthase family. In terms of assembly, homotetramer. The cofactor is FMNH2.

The catalysed reaction is 5-O-(1-carboxyvinyl)-3-phosphoshikimate = chorismate + phosphate. It participates in metabolic intermediate biosynthesis; chorismate biosynthesis; chorismate from D-erythrose 4-phosphate and phosphoenolpyruvate: step 7/7. Its function is as follows. Catalyzes the anti-1,4-elimination of the C-3 phosphate and the C-6 proR hydrogen from 5-enolpyruvylshikimate-3-phosphate (EPSP) to yield chorismate, which is the branch point compound that serves as the starting substrate for the three terminal pathways of aromatic amino acid biosynthesis. This reaction introduces a second double bond into the aromatic ring system. The protein is Chorismate synthase of Haemophilus influenzae (strain PittEE).